Here is a 336-residue protein sequence, read N- to C-terminus: DNA repair protein Rad51 homolog (336 aa).

Over residues 1–10 the composition is skewed to polar residues; it reads MEKLTNVQAQ. The disordered stretch occupies residues 1-20; sequence MEKLTNVQAQQEEEEEEGPL. 124 to 131 is an ATP binding site; the sequence is GEFRCGKT.

It belongs to the RecA family. RAD51 subfamily. As to quaternary structure, interacts with Rrp6; the interaction is required for the recruitment of spn-A to the DNA-damage response foci. Highly expressed in ovaries.

The protein localises to the nucleus. Its subcellular location is the cytoplasm. Its function is as follows. Plays an important role in homologous strand exchange, a key step in DNA repair through homologous recombination (HR). Binds to single and double-stranded DNA and exhibits DNA-dependent ATPase activity. Underwinds duplex DNA. Spindle genes are required for each of the symmetry-breaking steps that generate polarity during egg axis formation; oocyte positioning at the posterior of the cyst to generate the first AP polarity and inhibition of gurken (grk) signaling to the follicle cell layer to polarize first the AP axis and then DV axis. May have a role in female meiosis. The polypeptide is DNA repair protein Rad51 homolog (spn-A) (Drosophila melanogaster (Fruit fly)).